Consider the following 162-residue polypeptide: Corticoliberin (162 aa).

An N-terminal signal peptide occupies residues 1-24; sequence MKFQLWVSTGILLVSLLPCHECRA. The propeptide occupies 25-119; that stretch reads FIKSPASSPG…QEDPTEKAKR (95 aa). Residues 91–122 are disordered; the sequence is SQPGMRAASLDGADSPYSAQEDPTEKAKRAEE. Over residues 113-122 the composition is skewed to basic and acidic residues; that stretch reads PTEKAKRAEE. Ile-160 is modified (isoleucine amide).

Belongs to the sauvagine/corticotropin-releasing factor/urotensin I family.

The protein resides in the secreted. In terms of biological role, this hormone from hypothalamus regulates the release of corticotropin from pituitary gland. This is Corticoliberin (crh) from Xenopus laevis (African clawed frog).